The sequence spans 776 residues: Microtubule-associated protein tau (776 aa).

The span at 1-26 (MAEPRQEFDVMEDHAGTYGLGDRKDQ) shows a compositional bias: basic and acidic residues. The tract at residues 1–591 (MAEPRQEFDV…PVPMPDLKNV (591 aa)) is disordered. A2 carries the N-acetylalanine modification. Residues Y18 and Y29 each carry the phosphotyrosine modification. K44 participates in a covalent cross-link: Glycyl lysine isopeptide (Lys-Gly) (interchain with G-Cter in ubiquitin). Phosphoserine is present on residues S46 and S61. Residues 61-71 (SETSDAKSTPT) are compositionally biased toward polar residues. A phosphothreonine mark is found at T69, T71, and T111. Composition is skewed to basic and acidic residues over residues 179 to 189 (EGGRHAPELLK) and 207 to 216 (GGKERPGIKE). The segment covering 217-228 (EVDEDRDVDESS) has biased composition (acidic residues). Positions 314-323 (EQAHSEEHLG) are enriched in basic and acidic residues. Low complexity predominate over residues 325–340 (AAFPGAPGEGPEAQGP). Basic and acidic residues-rich tracts occupy residues 344 to 356 (EDTK…EPSE) and 381 to 393 (KSKD…DKKA). Residues 442–453 (VSSVTXRTGSSG) are compositionally biased toward low complexity. A compositionally biased stretch (basic and acidic residues) spans 455–466 (KEMKLKGADGKT). T470 carries the post-translational modification Phosphothreonine. Residue R472 is modified to Omega-N-methylarginine. An N6,N6-dimethyllysine; alternate modification is found at K480. N6-acetyllysine; alternate is present on K480. 3 positions are modified to phosphothreonine: T486, T492, and T498. A phosphoserine mark is found at S502, S526, and S530. Residues 517–528 (KSERGEPPKSGD) show a composition bias toward basic and acidic residues. A compositionally biased stretch (low complexity) spans 529 to 549 (RSGYSSPGSPGTPGSRSRTPS). A Phosphotyrosine modification is found at Y532. Phosphoserine occurs at positions 533, 534, and 537. Phosphothreonine occurs at positions 540 and 547. S549 carries the post-translational modification Phosphoserine. A Phosphothreonine modification is found at T552. Position 560 is an N6-acetyllysine (K560). Position 566 is a phosphothreonine (T566). Phosphoserine is present on residues S570 and S572. Tau/MAP repeat units lie at residues 579 to 609 (QTAP…GGGK), 610 to 640 (VQII…GGGS), 641 to 671 (VQIV…GGGQ), and 672 to 703 (VEVK…GGGN). A Glycyl lysine isopeptide (Lys-Gly) (interchain with G-Cter in ubiquitin) cross-link involves residue K589. K594 bears the N6-acetyllysine; alternate mark. K594 carries the N6-methyllysine; alternate modification. Residue K594 forms a Glycyl lysine isopeptide (Lys-Gly) (interchain with G-Cter in ubiquitin); alternate linkage. S597 carries the phosphoserine modification. K602 participates in a covalent cross-link: Glycyl lysine isopeptide (Lys-Gly) (interchain with G-Cter in ubiquitin). K616 is subject to N6-acetyllysine; alternate. K616 is covalently cross-linked (Glycyl lysine isopeptide (Lys-Gly) (interchain with G-Cter in ubiquitin); alternate). Residues S620 and S624 each carry the phosphoserine modification. K625 bears the N6-acetyllysine mark. S628 is modified (phosphoserine). An N6-acetyllysine; alternate modification is found at K633. A Glycyl lysine isopeptide (Lys-Gly) (interchain with G-Cter in ubiquitin); alternate cross-link involves residue K633. A Phosphoserine modification is found at S640. K646 bears the N6,N6-dimethyllysine; alternate mark. 3 positions are modified to N6-acetyllysine; alternate: K646, K652, and K656. Residues K646, K652, and K656 each participate in a glycyl lysine isopeptide (Lys-Gly) (interchain with G-Cter in ubiquitin); alternate cross-link. S659 bears the Phosphoserine mark. N6-acetyllysine; alternate is present on residues K666, K678, and K682. Glycyl lysine isopeptide (Lys-Gly) (interchain with G-Cter in ubiquitin); alternate cross-links involve residues K666, K678, and K682. At R684 the chain carries Omega-N-methylarginine. A Phosphoserine modification is found at S687. A Glycyl lysine isopeptide (Lys-Gly) (interchain with G-Cter in ubiquitin) cross-link involves residue K688. At S691 the chain carries Phosphoserine. An N6-acetyllysine; alternate modification is found at K704. Residue K704 forms a Glycyl lysine isopeptide (Lys-Gly) (interchain with G-Cter in ubiquitin); alternate linkage. K710 is covalently cross-linked (Glycyl lysine isopeptide (Lys-Gly) (interchain with G-Cter in ubiquitin)). K720 is modified (N6-acetyllysine; alternate). A Glycyl lysine isopeptide (Lys-Gly) (interchain with G-Cter in ubiquitin); alternate cross-link involves residue K720. A Phosphotyrosine modification is found at Y729. Residues S731 and S735 each carry the phosphoserine modification. A disordered region spans residues 733-752 (VVSGDTSPRHLSNVSSTGSI). Polar residues predominate over residues 736–751 (GDTSPRHLSNVSSTGS). A Phosphothreonine modification is found at T738. Phosphoserine is present on residues S739, S744, S751, and S757. T762 carries the post-translational modification Phosphothreonine.

As to quaternary structure, interacts with MARK1, MARK2, MARK3 and MARK4. Interacts with SQSTM1 when polyubiquitinated. Interacts with PSMC2 through SQSTM1. Interacts with FKBP4. Binds to CSNK1D. Interacts with SGK1. Interacts with EPM2A; the interaction dephosphorylates MAPT at Ser-396. Interacts with PIN1. Interacts with LRRK2. Interacts with LRP1, leading to endocytosis; this interaction is reduced in the presence of LRPAP1/RAP. Polyubiquitinated. Requires functional TRAF6 and may provoke SQSTM1-dependent degradation by the proteasome. In terms of processing, phosphorylation at various serine and threonine residues in S-P or T-P motifs by proline-directed protein kinases (PDPK1, CDK1, CDK5, GSK3, MAPK) (a few sites per protein in interphase, more in mitosis), and at serine residues in K-X-G-S motifs by MAP/microtubule affinity-regulating kinase (MARK1, MARK2, MARK3 or MARK4), causing detachment from microtubules, and their disassembly. Phosphorylation at Ser-597 by BRSK1 and BRSK2 in neurons affects ability to bind microtubules and plays a role in neuron polarization. Phosphorylated by PHK. Dephosphorylation at several serine and threonine residues by the serine/threonine phosphatase PPP5C.

It is found in the cytoplasm. Its subcellular location is the cytosol. The protein localises to the cell membrane. The protein resides in the cytoskeleton. It localises to the cell projection. It is found in the axon. Its subcellular location is the dendrite. In terms of biological role, promotes microtubule assembly and stability, and might be involved in the establishment and maintenance of neuronal polarity. The C-terminus binds axonal microtubules while the N-terminus binds neural plasma membrane components, suggesting that tau functions as a linker protein between both. Axonal polarity is predetermined by tau localization (in the neuronal cell) in the domain of the cell body defined by the centrosome. The short isoforms allow plasticity of the cytoskeleton whereas the longer isoforms may preferentially play a role in its stabilization. The sequence is that of Microtubule-associated protein tau (MAPT) from Hylobates lar (Lar gibbon).